Reading from the N-terminus, the 69-residue chain is Conotoxin Cal12.1p5 (69 aa).

Positions 1-23 (DLITNSYTRGKPRHVTSWRNLKT) are excised as a propeptide.

Contains 4 disulfide bonds. In terms of tissue distribution, expressed by the venom duct.

It is found in the secreted. This Californiconus californicus (California cone) protein is Conotoxin Cal12.1p5.